The chain runs to 164 residues: Class I hydrophobin rodA (164 aa).

Residues 1 to 18 (MRFSISALVLGLAATVYA) form the signal peptide. An N-linked (GlcNAc...) asparagine glycan is attached at Asn-50. 4 disulfides stabilise this stretch: Cys-60/Cys-138, Cys-68/Cys-132, Cys-69/Cys-109, and Cys-139/Cys-157.

Belongs to the fungal hydrophobin family. As to quaternary structure, self-assembles to form functional amyloid fibrils called rodlets. Self-assembly into fibrillar rodlets occurs spontaneously at hydrophobic:hydrophilic interfaces and the rodlets further associate laterally to form amphipathic monolayers.

The protein localises to the secreted. Its subcellular location is the cell wall. In terms of biological role, aerial growth, conidiation, and dispersal of filamentous fungi in the environment rely upon a capability of their secreting small amphipathic proteins called hydrophobins (HPBs) with low sequence identity. Class I can self-assemble into an outermost layer of rodlet bundles on aerial cell surfaces, conferring cellular hydrophobicity that supports fungal growth, development and dispersal; whereas Class II form highly ordered films at water-air interfaces through intermolecular interactions but contribute nothing to the rodlet structure. RodA is a class I hydrophobin involved in the cell surface hydrophobicity and conidiation under aerial conditions. The surface rodlet layer of the conidial cell wall makes airborne conidia of filamentous fungi inert to both innate and adaptive immunity. The polypeptide is Class I hydrophobin rodA (Penicillium camembertii).